The chain runs to 97 residues: Histone H1.C2 (97 aa).

Residues 24 to 97 (AAVPPKKAAP…KKAVKKAPKK (74 aa)) are disordered. Residues 31-97 (AAPKKAVAKK…KKAVKKAPKK (67 aa)) show a composition bias toward basic residues.

The protein localises to the nucleus. The protein resides in the chromosome. This is Histone H1.C2 from Trypanosoma cruzi.